The primary structure comprises 308 residues: MIDRFGRPLEDLRITLTHVCNFECFFCHMEGEEGDNYILSKEDILLVAKVAKNFGINSVKLTGGEPTLRRDLVEIVRGLKQLGYRDVSMTTNGFLLKDLAYKLKLAGLDRINVSLHAISRETFKKITGVDAFDRVIEGIKSAIDVGLVPVKLNFVVNRRNREEVFKFIELSQNLGVNEIHLIELHPVGLGKLAFKEHDDLREIEEYIEKISIKKQIRKKHFRPRYVLPSGLIVEVVKPYANPIFCAGCNRIRLSVDGKLKTCLYREDNVIDILDILKGEYSEDVKEELLGRAFMIAIAIREPNFKYKI.

A Radical SAM core domain is found at 4-224; it reads RFGRPLEDLR…QIRKKHFRPR (221 aa). Arginine 13 contributes to the GTP binding site. Positions 20, 24, and 27 each coordinate [4Fe-4S] cluster. Lysine 60 contacts GTP. Glycine 64 is a binding site for S-adenosyl-L-methionine. Threonine 90 contributes to the GTP binding site. S-adenosyl-L-methionine is bound at residue serine 114. Residue lysine 151 coordinates GTP. The [4Fe-4S] cluster site is built by cysteine 245 and cysteine 248. Residue 250–252 coordinates GTP; the sequence is RIR. Position 262 (cysteine 262) interacts with [4Fe-4S] cluster.

It belongs to the radical SAM superfamily. MoaA family. It depends on [4Fe-4S] cluster as a cofactor.

It carries out the reaction GTP + AH2 + S-adenosyl-L-methionine = (8S)-3',8-cyclo-7,8-dihydroguanosine 5'-triphosphate + 5'-deoxyadenosine + L-methionine + A + H(+). It functions in the pathway cofactor biosynthesis; molybdopterin biosynthesis. In terms of biological role, catalyzes the cyclization of GTP to (8S)-3',8-cyclo-7,8-dihydroguanosine 5'-triphosphate. In Saccharolobus islandicus (strain M.16.27) (Sulfolobus islandicus), this protein is Probable GTP 3',8-cyclase.